A 416-amino-acid polypeptide reads, in one-letter code: Gamma-glutamyl phosphate reductase (416 aa).

This sequence belongs to the gamma-glutamyl phosphate reductase family.

The protein localises to the cytoplasm. It catalyses the reaction L-glutamate 5-semialdehyde + phosphate + NADP(+) = L-glutamyl 5-phosphate + NADPH + H(+). The protein operates within amino-acid biosynthesis; L-proline biosynthesis; L-glutamate 5-semialdehyde from L-glutamate: step 2/2. Its function is as follows. Catalyzes the NADPH-dependent reduction of L-glutamate 5-phosphate into L-glutamate 5-semialdehyde and phosphate. The product spontaneously undergoes cyclization to form 1-pyrroline-5-carboxylate. This is Gamma-glutamyl phosphate reductase from Streptococcus thermophilus (strain CNRZ 1066).